The chain runs to 319 residues: Porphobilinogen deaminase 1 (319 aa).

The residue at position 244 (Cys-244) is an S-(dipyrrolylmethanemethyl)cysteine.

Belongs to the HMBS family. As to quaternary structure, monomer. Requires dipyrromethane as cofactor.

It carries out the reaction 4 porphobilinogen + H2O = hydroxymethylbilane + 4 NH4(+). It functions in the pathway porphyrin-containing compound metabolism; protoporphyrin-IX biosynthesis; coproporphyrinogen-III from 5-aminolevulinate: step 2/4. In terms of biological role, tetrapolymerization of the monopyrrole PBG into the hydroxymethylbilane pre-uroporphyrinogen in several discrete steps. In Streptomyces coelicolor (strain ATCC BAA-471 / A3(2) / M145), this protein is Porphobilinogen deaminase 1 (hemC1).